The chain runs to 182 residues: MSKQLAAQVPAEPVVLGKMGSSYGIRGWLRVFSSTEDAESIFDYQPWFIQKAGQWQQVQLESWKHHNQDLIIKLKGVDDRDAANLLTNCEIVVDSSQLPALEEGDYYWKDLMGCQVVTAEGYDLGKVIDMMETGSNDVLVIKANLKDAFGIKERLVPFLDGQVIKKVDLATRTIEVDWDPGF.

The region spanning 102-182 (EEGDYYWKDL…TIEVDWDPGF (81 aa)) is the PRC barrel domain.

Belongs to the RimM family. As to quaternary structure, binds ribosomal protein uS19.

It is found in the cytoplasm. An accessory protein needed during the final step in the assembly of 30S ribosomal subunit, possibly for assembly of the head region. Essential for efficient processing of 16S rRNA. May be needed both before and after RbfA during the maturation of 16S rRNA. It has affinity for free ribosomal 30S subunits but not for 70S ribosomes. This Salmonella enteritidis PT4 (strain P125109) protein is Ribosome maturation factor RimM.